The chain runs to 237 residues: Orotate phosphoribosyltransferase (237 aa).

A 5-phospho-alpha-D-ribose 1-diphosphate-binding site is contributed by lysine 29. 37–38 (FF) contributes to the orotate binding site. 5-phospho-alpha-D-ribose 1-diphosphate is bound by residues 79–80 (YK), arginine 105, lysine 106, lysine 109, histidine 111, and 130–138 (DDVMSAGTA). Orotate contacts are provided by serine 134 and arginine 162.

This sequence belongs to the purine/pyrimidine phosphoribosyltransferase family. PyrE subfamily. In terms of assembly, homodimer. The cofactor is Mg(2+).

The catalysed reaction is orotidine 5'-phosphate + diphosphate = orotate + 5-phospho-alpha-D-ribose 1-diphosphate. It participates in pyrimidine metabolism; UMP biosynthesis via de novo pathway; UMP from orotate: step 1/2. Catalyzes the transfer of a ribosyl phosphate group from 5-phosphoribose 1-diphosphate to orotate, leading to the formation of orotidine monophosphate (OMP). The chain is Orotate phosphoribosyltransferase from Polaromonas naphthalenivorans (strain CJ2).